A 2147-amino-acid chain; its full sequence is Large tegument protein deneddylase (2147 aa).

Positions 1 to 233 are deubiquitination activity; it reads MKIVRASRDQ…PDIDASVMSG (233 aa). One can recognise a Peptidase C76 domain in the interval 3 to 223; sequence IVRASRDQSA…LVQIMDQYKD (221 aa). Residues Cys23, Asp156, and His158 contribute to the active site. Disordered stretches follow at residues 228-301, 1419-1438, 1567-1589, and 2034-2072; these read ASVM…RSRR, EIGQHKKDPPSTGEEVGLPE, SSSSGGGNGSGASSRQKDQQNAT, and RDPPRLKRASGDSSSSVPAEDRDPDARPQDSVPDQSLSE. Residues 240 to 261 are compositionally biased toward low complexity; the sequence is SISSSAASASASVSPLPSGAAS. A region of interest (interaction with inner tegument protein) is located at residue Thr292. Over residues 2052–2061 the composition is skewed to basic and acidic residues; it reads AEDRDPDARP.

The protein belongs to the herpesviridae large tegument protein family. In terms of assembly, interacts with host CUL1 and CUL4A; these interactions inhibit the E3 ligase activity of cullins. Interacts with inner tegument protein. Interacts with capsid vertex specific component CVC2. Interacts with the major capsid protein/MCP.

The protein resides in the virion tegument. It is found in the host cytoplasm. It localises to the host nucleus. It catalyses the reaction Thiol-dependent hydrolysis of ester, thioester, amide, peptide and isopeptide bonds formed by the C-terminal Gly of ubiquitin (a 76-residue protein attached to proteins as an intracellular targeting signal).. In terms of biological role, large tegument protein that plays multiple roles in the viral cycle. During viral entry, remains associated with the capsid while most of the tegument is detached and participates in the capsid transport toward the host nucleus. Plays a role in the routing of the capsid at the nuclear pore complex and subsequent uncoating. Within the host nucleus, acts as a deneddylase and promotes the degradation of nuclear CRLs (cullin-RING ubiquitin ligases) and thereby stabilizes nuclear CRL substrates, while cytoplasmic CRLs remain unaffected. These modifications prevent host cell cycle S-phase progression and create a favorable environment allowing efficient viral genome replication. Participates later in the secondary envelopment of capsids. Indeed, plays a linker role for the association of the outer viral tegument to the capsids together with the inner tegument protein. This Mus musculus (Mouse) protein is Large tegument protein deneddylase (M48).